The primary structure comprises 338 residues: Glycerol-3-phosphate dehydrogenase [NAD(P)+] (338 aa).

Residues Ser13, Trp14, and Lys108 each coordinate NADPH. Sn-glycerol 3-phosphate is bound by residues Lys108, Gly139, and Ser141. Position 143 (Ala143) interacts with NADPH. Residues Lys194, Asp247, Ser257, Arg258, and Asn259 each contribute to the sn-glycerol 3-phosphate site. Lys194 functions as the Proton acceptor in the catalytic mechanism. Arg258 is an NADPH binding site. Residues Val282 and Glu284 each contribute to the NADPH site.

Belongs to the NAD-dependent glycerol-3-phosphate dehydrogenase family.

The protein localises to the cytoplasm. It catalyses the reaction sn-glycerol 3-phosphate + NAD(+) = dihydroxyacetone phosphate + NADH + H(+). It carries out the reaction sn-glycerol 3-phosphate + NADP(+) = dihydroxyacetone phosphate + NADPH + H(+). Its pathway is membrane lipid metabolism; glycerophospholipid metabolism. Its function is as follows. Catalyzes the reduction of the glycolytic intermediate dihydroxyacetone phosphate (DHAP) to sn-glycerol 3-phosphate (G3P), the key precursor for phospholipid synthesis. The polypeptide is Glycerol-3-phosphate dehydrogenase [NAD(P)+] (Streptococcus suis (strain 98HAH33)).